Consider the following 399-residue polypeptide: UDP-galactopyranose mutase (399 aa).

FAD is bound by residues F18, E38, N46, and L66. UDP-alpha-D-galactose is bound by residues F157, T162, W166, and Y191. An FAD-binding site is contributed by 224–225; sequence DW. N282, R292, and Y328 together coordinate UDP-alpha-D-galactose. R360 serves as a coordination point for FAD. UDP-alpha-D-galactose is bound at residue Y366. FAD is bound at residue 367–369; it reads LDM.

Belongs to the UDP-galactopyranose/dTDP-fucopyranose mutase family. Homotetramer. It depends on FAD as a cofactor.

It carries out the reaction UDP-alpha-D-galactose = UDP-alpha-D-galactofuranose. Its pathway is cell wall biogenesis; cell wall polysaccharide biosynthesis. Its function is as follows. Catalyzes the interconversion through a 2-keto intermediate of uridine diphosphogalactopyranose (UDP-GalP) into uridine diphosphogalactofuranose (UDP-GalF) which is a key building block for cell wall construction in Mycobacterium tuberculosis. The protein is UDP-galactopyranose mutase (glf) of Mycobacterium tuberculosis (strain CDC 1551 / Oshkosh).